The following is a 222-amino-acid chain: 7-cyano-7-deazaguanine synthase (222 aa).

8–18 (LSGGMDSTTLA) lines the ATP pocket. Residues Cys188, Cys196, Cys199, and Cys202 each contribute to the Zn(2+) site.

It belongs to the QueC family. Zn(2+) is required as a cofactor.

The catalysed reaction is 7-carboxy-7-deazaguanine + NH4(+) + ATP = 7-cyano-7-deazaguanine + ADP + phosphate + H2O + H(+). It functions in the pathway purine metabolism; 7-cyano-7-deazaguanine biosynthesis. Its function is as follows. Catalyzes the ATP-dependent conversion of 7-carboxy-7-deazaguanine (CDG) to 7-cyano-7-deazaguanine (preQ(0)). The polypeptide is 7-cyano-7-deazaguanine synthase (Methanoculleus marisnigri (strain ATCC 35101 / DSM 1498 / JR1)).